We begin with the raw amino-acid sequence, 318 residues long: Biotin synthase (318 aa).

A Radical SAM core domain is found at 40-260 (DDIQKASLLS…VATARIIMPL (221 aa)). Cys-55, Cys-59, and Cys-62 together coordinate [4Fe-4S] cluster. 4 residues coordinate [2Fe-2S] cluster: Cys-100, Cys-132, Cys-192, and Arg-264.

Belongs to the radical SAM superfamily. Biotin synthase family. Homodimer. [4Fe-4S] cluster is required as a cofactor. The cofactor is [2Fe-2S] cluster.

The catalysed reaction is (4R,5S)-dethiobiotin + (sulfur carrier)-SH + 2 reduced [2Fe-2S]-[ferredoxin] + 2 S-adenosyl-L-methionine = (sulfur carrier)-H + biotin + 2 5'-deoxyadenosine + 2 L-methionine + 2 oxidized [2Fe-2S]-[ferredoxin]. The protein operates within cofactor biosynthesis; biotin biosynthesis; biotin from 7,8-diaminononanoate: step 2/2. Its function is as follows. Catalyzes the conversion of dethiobiotin (DTB) to biotin by the insertion of a sulfur atom into dethiobiotin via a radical-based mechanism. The polypeptide is Biotin synthase (Ruegeria pomeroyi (strain ATCC 700808 / DSM 15171 / DSS-3) (Silicibacter pomeroyi)).